Consider the following 426-residue polypeptide: 26S proteasome regulatory subunit 7 homolog A (426 aa).

Residue glycine 209–threonine 216 participates in ATP binding. Glycyl lysine isopeptide (Lys-Gly) (interchain with G-Cter in ubiquitin) cross-links involve residues lysine 400 and lysine 415.

This sequence belongs to the AAA ATPase family. In terms of assembly, component of the 19S regulatory particle (RP/PA700) base subcomplex of the 26S proteasome. The 26S proteasome is composed of a core protease (CP), known as the 20S proteasome, capped at one or both ends by the 19S regulatory particle (RP/PA700). The RP/PA700 complex is composed of at least 17 different subunits in two subcomplexes, the base and the lid, which form the portions proximal and distal to the 20S proteolytic core, respectively.

The protein resides in the cytoplasm. The protein localises to the nucleus. Its function is as follows. The 26S proteasome is involved in the ATP-dependent degradation of ubiquitinated proteins. The regulatory (or ATPase) complex confers ATP dependency and substrate specificity to the 26S complex. The polypeptide is 26S proteasome regulatory subunit 7 homolog A (RPT1A) (Arabidopsis thaliana (Mouse-ear cress)).